The primary structure comprises 221 residues: MLKIDKVLSAPHGIAAVLVRRAPKLVLPFGERSKSRLRAVLDNGDEAALFLPRGTVLRGGDLLIAEDGSFVEVQAAAERVLEVRAADQHGLMRAAYHLGNRHTPVEVGRDYLRLEFDPVLADMLARLRVQAVQIDAPFEPEAGAYGGGHKHGHDATFAEDYAAAQAVFHEHHGHDHDHGHSHSHSHSHSHSHSHSHDHDHDHDHEHDVKGHVHGPGCGHKH.

Residues 171-180 (HHGHDHDHGH) show a composition bias toward basic and acidic residues. A disordered region spans residues 171–221 (HHGHDHDHGHSHSHSHSHSHSHSHSHDHDHDHDHEHDVKGHVHGPGCGHKH). Positions 181 to 193 (SHSHSHSHSHSHS) are enriched in basic residues. A compositionally biased stretch (basic and acidic residues) spans 194-210 (HSHDHDHDHDHEHDVKG).

It belongs to the UreE family.

The protein localises to the cytoplasm. In terms of biological role, involved in urease metallocenter assembly. Binds nickel. Probably functions as a nickel donor during metallocenter assembly. This chain is Urease accessory protein UreE, found in Cupriavidus pinatubonensis (strain JMP 134 / LMG 1197) (Cupriavidus necator (strain JMP 134)).